A 569-amino-acid chain; its full sequence is BTB/POZ domain-containing protein At3g50840 (569 aa).

The BTB domain occupies 18–87; the sequence is SDIEIEVDDI…SYGFKVDISV (70 aa). The NPH3 domain occupies 194 to 459; that stretch reads ELWFEDLTEL…VQVLFLEQLQ (266 aa). Positions 240–259 are enriched in low complexity; sequence ISRSSSASSSSSSSSTTIAS. Residues 240–261 form a disordered region; sequence ISRSSSASSSSSSSSTTIASEN. Tyr-400 carries the post-translational modification Phosphotyrosine.

This sequence belongs to the NPH3 family.

Its pathway is protein modification; protein ubiquitination. Its function is as follows. May act as a substrate-specific adapter of an E3 ubiquitin-protein ligase complex (CUL3-RBX1-BTB) which mediates the ubiquitination and subsequent proteasomal degradation of target proteins. The sequence is that of BTB/POZ domain-containing protein At3g50840 from Arabidopsis thaliana (Mouse-ear cress).